Here is a 163-residue protein sequence, read N- to C-terminus: 3-dehydroquinate dehydratase (163 aa).

Residue Tyr-28 is the Proton acceptor of the active site. Positions 80, 86, and 93 each coordinate substrate. The Proton donor role is filled by His-106. Residues 107–108 (IS) and Arg-117 each bind substrate.

This sequence belongs to the type-II 3-dehydroquinase family. Homododecamer.

It catalyses the reaction 3-dehydroquinate = 3-dehydroshikimate + H2O. The protein operates within metabolic intermediate biosynthesis; chorismate biosynthesis; chorismate from D-erythrose 4-phosphate and phosphoenolpyruvate: step 3/7. Functionally, catalyzes a trans-dehydration via an enolate intermediate. The protein is 3-dehydroquinate dehydratase of Bradyrhizobium sp. (strain BTAi1 / ATCC BAA-1182).